Here is a 146-residue protein sequence, read N- to C-terminus: uncharacterized protein (146 aa).

A helical transmembrane segment spans residues 7–27 (FVLSITIVLVILIIIAYIWYN).

The protein belongs to the asfivirus E146L family.

It localises to the host membrane. The protein resides in the virion. This is an uncharacterized protein from Ornithodoros (relapsing fever ticks).